The sequence spans 167 residues: uncharacterized protein (167 aa).

The segment covering M1–P13 has biased composition (basic and acidic residues). 2 disordered regions span residues M1–R26 and E67–N167. A compositionally biased stretch (low complexity) spans S71–H80. Over residues V102–K156 the composition is skewed to basic and acidic residues.

This is an uncharacterized protein from Saccharomyces cerevisiae (strain ATCC 204508 / S288c) (Baker's yeast).